Consider the following 858-residue polypeptide: Bifunctional uridylyltransferase/uridylyl-removing enzyme (858 aa).

The interval 1–324 (MSASVAEPPP…PATSGVTRVL (324 aa)) is uridylyltransferase. A uridylyl-removing region spans residues 325–681 (SPGRFVEKQG…ARPSPVGDAL (357 aa)). The region spanning 443–565 (VDQHILMVLR…VGSERRLTAL (123 aa)) is the HD domain. 2 consecutive ACT domains span residues 682–761 (QVLV…PEPS) and 790–858 (ILSV…AIAV).

Belongs to the GlnD family. Mg(2+) serves as cofactor.

It catalyses the reaction [protein-PII]-L-tyrosine + UTP = [protein-PII]-uridylyl-L-tyrosine + diphosphate. The enzyme catalyses [protein-PII]-uridylyl-L-tyrosine + H2O = [protein-PII]-L-tyrosine + UMP + H(+). With respect to regulation, uridylyltransferase (UTase) activity is inhibited by glutamine, while glutamine activates uridylyl-removing (UR) activity. Functionally, modifies, by uridylylation and deuridylylation, the PII regulatory proteins (GlnB and homologs), in response to the nitrogen status of the cell that GlnD senses through the glutamine level. Under low glutamine levels, catalyzes the conversion of the PII proteins and UTP to PII-UMP and PPi, while under higher glutamine levels, GlnD hydrolyzes PII-UMP to PII and UMP (deuridylylation). Thus, controls uridylylation state and activity of the PII proteins, and plays an important role in the regulation of nitrogen assimilation and metabolism. The polypeptide is Bifunctional uridylyltransferase/uridylyl-removing enzyme (Burkholderia mallei (strain ATCC 23344)).